We begin with the raw amino-acid sequence, 513 residues long: Maturase K (513 aa).

The protein belongs to the intron maturase 2 family. MatK subfamily.

It localises to the plastid. Its subcellular location is the chloroplast. Functionally, usually encoded in the trnK tRNA gene intron. Probably assists in splicing its own and other chloroplast group II introns. This Zea mays (Maize) protein is Maturase K.